We begin with the raw amino-acid sequence, 194 residues long: Fibroblast growth factor 7 (194 aa).

A signal peptide spans Met1–Ala31. A glycan (N-linked (GlcNAc...) asparagine) is linked at Asn45.

Belongs to the heparin-binding growth factors family. Interacts with FGFBP1. Interacts with FGFR2. Affinity between fibroblast growth factors (FGFs) and their receptors is increased by heparan sulfate glycosaminoglycans that function as coreceptors.

The protein resides in the secreted. In terms of biological role, plays an important role in the regulation of embryonic development, cell proliferation and cell differentiation. Required for normal branching morphogenesis. Growth factor active on keratinocytes. Possible major paracrine effector of normal epithelial cell proliferation. This Cervus elaphus (Red deer) protein is Fibroblast growth factor 7 (FGF7).